An 88-amino-acid chain; its full sequence is Probable oxaloacetate decarboxylase gamma chain (88 aa).

A helical transmembrane segment spans residues 13–35; that stretch reads LMFSGMGFVIIFLLILIWAIGIV.

It belongs to the OadG family. In terms of assembly, heterotrimer of an alpha, a beta and a gamma subunit. Na(+) serves as cofactor.

Its subcellular location is the cell membrane. The catalysed reaction is oxaloacetate + 2 Na(+)(in) + H(+) = pyruvate + 2 Na(+)(out) + CO2. Catalyzes the decarboxylation of oxaloacetate coupled to Na(+) translocation. The chain is Probable oxaloacetate decarboxylase gamma chain from Mannheimia succiniciproducens (strain KCTC 0769BP / MBEL55E).